The sequence spans 469 residues: Cell division protein FtsP (469 aa).

Positions 1–27 (MKLSRRQFLQRSTLAGVATVTPTSLWA) form a signal peptide, tat-type signal.

It belongs to the FtsP family. Predicted to be exported by the Tat system. The position of the signal peptide cleavage has not been experimentally proven.

It localises to the periplasm. Functionally, cell division protein that is required for growth during stress conditions. May be involved in protecting or stabilizing the divisomal assembly under conditions of stress. This chain is Cell division protein FtsP, found in Glaesserella parasuis serovar 5 (strain SH0165) (Haemophilus parasuis).